The following is a 628-amino-acid chain: F-box only protein 21 (628 aa).

Positions Ser-28–Leu-84 constitute an F-box domain.

Directly interacts with SKP1 and CUL1.

Functionally, substrate-recognition component of the SCF (SKP1-CUL1-F-box protein)-type E3 ubiquitin ligase complex. This is F-box only protein 21 (FBXO21) from Homo sapiens (Human).